The following is a 795-amino-acid chain: Phenylalanine--tRNA ligase beta subunit (795 aa).

The tRNA-binding domain occupies alanine 39–arginine 148. The B5 domain maps to proline 401 to asparagine 476. Mg(2+) is bound by residues aspartate 454, aspartate 460, glutamate 463, and glutamate 464. The FDX-ACB domain occupies serine 701–arginine 794.

Belongs to the phenylalanyl-tRNA synthetase beta subunit family. Type 1 subfamily. In terms of assembly, tetramer of two alpha and two beta subunits. It depends on Mg(2+) as a cofactor.

It localises to the cytoplasm. It carries out the reaction tRNA(Phe) + L-phenylalanine + ATP = L-phenylalanyl-tRNA(Phe) + AMP + diphosphate + H(+). This Sodalis glossinidius (strain morsitans) protein is Phenylalanine--tRNA ligase beta subunit.